Here is a 445-residue protein sequence, read N- to C-terminus: uncharacterized protein (445 aa).

His-66 contacts Zn(2+). Glu-69 serves as the catalytic Proton acceptor. Positions 70 and 146 each coordinate Zn(2+). A disordered region spans residues 232-251 (GRQSAPPRKSTGRINGGPAL).

The protein belongs to the peptidase M16 family. Requires Zn(2+) as cofactor.

This is an uncharacterized protein from Mycobacterium leprae (strain TN).